Here is a 1080-residue protein sequence, read N- to C-terminus: Headcase protein (1080 aa).

Disordered regions lie at residues 1–27 (MAPR…LQQQ), 181–277 (IYLN…GNNG), 310–335 (SLSS…ISVS), 655–693 (PLES…QPPK), 798–826 (SKYQ…QHAT), 891–916 (SGCS…DGSK), and 940–974 (QRQQ…NGWS). The span at 181–197 (IYLNGSGNRPTLANGSL) shows a compositional bias: polar residues. Gly residues predominate over residues 218–228 (NGGGGGGGAGV). Polar residues predominate over residues 232-251 (TKTPLSNNNGNSYAGLTPNP). Low complexity predominate over residues 263–277 (NNGNTASNGSSGNNG). The segment covering 663-688 (GATTTQVPNAQGSPTASGCSSNTIAS) has biased composition (polar residues). Over residues 801 to 826 (QQQQHQQQQQQRQQQHNLQPQQQHAT) the composition is skewed to low complexity. Residues 900-913 (QPSLSPTASSNGND) show a composition bias toward polar residues. Residues 941-974 (RQQPPQQQVPQQQPHAASPTASLTSSSSSSNGWS) show a composition bias toward low complexity.

As to expression, expressed in all imaginal cells of the embryo and larvae. Expressed in a subset of tracheal fusion cells from stage 14 to the end of embryogenesis in metameres 2-9, lateral trunk and ventral anastomoses.

The protein localises to the cytoplasm. In terms of biological role, required for imaginal cell differentiation, may be involved in hormonal responsiveness during metamorphosis. Involved in an inhibitory signaling mechanism to determine the number of cells that will form unicellular sprouts in the trachea. Regulated by transcription factor esg. The longer hdc protein is completely functional and the shorter protein carries some function. The protein is Headcase protein of Drosophila melanogaster (Fruit fly).